A 90-amino-acid polypeptide reads, in one-letter code: Bombyxin B-9 (90 aa).

An N-terminal signal peptide occupies residues 1-20 (MMKTAVMFILVVVISLTYSS). Disulfide bonds link Cys-30-Cys-75, Cys-42-Cys-88, and Cys-74-Cys-79. Residues 49–64 (GGAQYAPYWQETYLRS) constitute a propeptide, c peptide like.

This sequence belongs to the insulin family. As to quaternary structure, heterodimer of a B chain and an A chain linked by two disulfide bonds.

It localises to the secreted. Its function is as follows. Brain peptide responsible for activation of prothoracic glands to produce ecdysone in insects. In Bombyx mori (Silk moth), this protein is Bombyxin B-9 (BBXB9).